A 272-amino-acid polypeptide reads, in one-letter code: Glutamate racemase (272 aa).

Substrate-binding positions include 16–17 (DS) and 48–49 (YG). Cysteine 79 serves as the catalytic Proton donor/acceptor. A substrate-binding site is contributed by 80–81 (NT). The active-site Proton donor/acceptor is cysteine 191. 192 to 193 (TH) provides a ligand contact to substrate.

It belongs to the aspartate/glutamate racemases family.

The catalysed reaction is L-glutamate = D-glutamate. It functions in the pathway cell wall biogenesis; peptidoglycan biosynthesis. In terms of biological role, provides the (R)-glutamate required for cell wall biosynthesis. The protein is Glutamate racemase of Chlorobium phaeobacteroides (strain DSM 266 / SMG 266 / 2430).